A 143-amino-acid polypeptide reads, in one-letter code: uncharacterized protein (143 aa).

Residues 13 to 143 (SLQFPHHRPG…QDAAHQCRIQ (131 aa)) are disordered. The segment covering 17-31 (PHHRPGLRRHRKNTT) has biased composition (basic residues). Basic and acidic residues-rich tracts occupy residues 35 to 48 (AAVD…RGDA), 84 to 96 (DGRE…AEEK), and 112 to 133 (EKQH…DHAG). Over residues 134 to 143 (QDAAHQCRIQ) the composition is skewed to low complexity.

This is an uncharacterized protein from Homo sapiens (Human).